Reading from the N-terminus, the 250-residue chain is 3-deoxy-manno-octulosonate cytidylyltransferase (250 aa).

It belongs to the KdsB family.

The protein localises to the cytoplasm. The catalysed reaction is 3-deoxy-alpha-D-manno-oct-2-ulosonate + CTP = CMP-3-deoxy-beta-D-manno-octulosonate + diphosphate. It functions in the pathway nucleotide-sugar biosynthesis; CMP-3-deoxy-D-manno-octulosonate biosynthesis; CMP-3-deoxy-D-manno-octulosonate from 3-deoxy-D-manno-octulosonate and CTP: step 1/1. The protein operates within bacterial outer membrane biogenesis; lipopolysaccharide biosynthesis. Functionally, activates KDO (a required 8-carbon sugar) for incorporation into bacterial lipopolysaccharide in Gram-negative bacteria. The sequence is that of 3-deoxy-manno-octulosonate cytidylyltransferase from Janthinobacterium sp. (strain Marseille) (Minibacterium massiliensis).